The chain runs to 339 residues: DNA-directed RNA polymerase subunit alpha (339 aa).

The alpha N-terminal domain (alpha-NTD) stretch occupies residues 1 to 233 (MVREEVAGST…DLFLPFLHAE (233 aa)). The tract at residues 264–339 (KKGIPLNCIF…IDLLKNKLSF (76 aa)) is alpha C-terminal domain (alpha-CTD).

This sequence belongs to the RNA polymerase alpha chain family. As to quaternary structure, in plastids the minimal PEP RNA polymerase catalytic core is composed of four subunits: alpha, beta, beta', and beta''. When a (nuclear-encoded) sigma factor is associated with the core the holoenzyme is formed, which can initiate transcription.

The protein localises to the plastid. It is found in the chloroplast. It carries out the reaction RNA(n) + a ribonucleoside 5'-triphosphate = RNA(n+1) + diphosphate. Functionally, DNA-dependent RNA polymerase catalyzes the transcription of DNA into RNA using the four ribonucleoside triphosphates as substrates. This Crithopsis delileana protein is DNA-directed RNA polymerase subunit alpha.